We begin with the raw amino-acid sequence, 20 residues long: Protein PR-L3 (20 aa).

The protein belongs to the BetVI family.

The chain is Protein PR-L3 from Lupinus luteus (European yellow lupine).